The sequence spans 800 residues: MLISNEWLKEYVTIDDSVSDLAERITRTGIEVDDLIDYTKDIKNLVVGFVKSKEKHPDADKLNVCQVDIGEDEPVQIVCGAPNVDAGQYVIVAKVGGRLPGGIKIKRAKLRGERSEGMICSLQEIGISSNYIPKSFESGIYVFSESQVPGTDALQALYLDDQVMEFDLTPNRADALSMIGTAYEVAALYNTKMTKPETTSNELELSANDELTVTIENEDKVPYYSARVVHDVTIEPSPIWMQARLIKAGIRPINNVVDISNYVLLEYGQPLHMFDQDAIGSQQIVVRQANEGEKMTTLDDTERELLTSDIVITNGQTPIALAGVMGGDFSEVKEQTSNIVIEGAIFDPVSIRHTSRRLNLRSESSSRFEKGIATEFVDEAVDRACYLLQTYANGKVLKDRVSSGELGAFITPIDITADKINRTIGFDLSQNDIVTIFNQLGFDTEINDDVITVLVPSRRKDITIKEDLIEEVARIYGYDDIPSTLPVFDKVTSGQLTDRQYKTRMVKEVLEGAGLDQAITYSLVSKEDATAFSMQQRQTIDLLMPMSEAHASLRQSLLPHLIEAASYNVARKNKDVKLFEIGNVFFANGEGELPDQVEYLSGILTGDYVVNQWQGKKETVDFYLAKGVVDRVSEKLNLEFSYRRADIDGLHPGRTAEILLENKVVGFIGELHPTLAADNDLKRTYVFELNFDALMAVSVGYINYQPIPRFPGMSRDIALEVDQNIPAADLLSTIHAHGGNILKDTLVFDVYQGEHLEKGKKSIAIRLNYLDTEETLTDERVSKVQAEIEAALIEQGAVIR.

In terms of domain architecture, tRNA-binding spans 39–154 (TKDIKNLVVG…ESQVPGTDAL (116 aa)). The region spanning 408–483 (AFITPIDITA…RIYGYDDIPS (76 aa)) is the B5 domain. 4 residues coordinate Mg(2+): Asp-461, Asp-467, Glu-470, and Glu-471. An FDX-ACB domain is found at 708–800 (PRFPGMSRDI…ALIEQGAVIR (93 aa)).

The protein belongs to the phenylalanyl-tRNA synthetase beta subunit family. Type 1 subfamily. Tetramer of two alpha and two beta subunits. The cofactor is Mg(2+).

It localises to the cytoplasm. It catalyses the reaction tRNA(Phe) + L-phenylalanine + ATP = L-phenylalanyl-tRNA(Phe) + AMP + diphosphate + H(+). This is Phenylalanine--tRNA ligase beta subunit from Staphylococcus aureus (strain Mu50 / ATCC 700699).